The sequence spans 301 residues: Pyridoxal 5'-phosphate synthase subunit PdxS (301 aa).

Asp-31 provides a ligand contact to D-ribose 5-phosphate. Lys-88 functions as the Schiff-base intermediate with D-ribose 5-phosphate in the catalytic mechanism. Gly-160 is a binding site for D-ribose 5-phosphate. Lys-172 is a binding site for D-glyceraldehyde 3-phosphate. D-ribose 5-phosphate contacts are provided by residues Gly-221 and 242–243; that span reads GS.

The protein belongs to the PdxS/SNZ family. As to quaternary structure, in the presence of PdxT, forms a dodecamer of heterodimers.

It catalyses the reaction aldehydo-D-ribose 5-phosphate + D-glyceraldehyde 3-phosphate + L-glutamine = pyridoxal 5'-phosphate + L-glutamate + phosphate + 3 H2O + H(+). Its pathway is cofactor biosynthesis; pyridoxal 5'-phosphate biosynthesis. Catalyzes the formation of pyridoxal 5'-phosphate from ribose 5-phosphate (RBP), glyceraldehyde 3-phosphate (G3P) and ammonia. The ammonia is provided by the PdxT subunit. Can also use ribulose 5-phosphate and dihydroxyacetone phosphate as substrates, resulting from enzyme-catalyzed isomerization of RBP and G3P, respectively. The sequence is that of Pyridoxal 5'-phosphate synthase subunit PdxS from Methanosarcina acetivorans (strain ATCC 35395 / DSM 2834 / JCM 12185 / C2A).